The following is an 836-amino-acid chain: Translation initiation factor IF-2 (836 aa).

The segment covering 1–17 (MLRLMRQKKLSIQRRTK) has biased composition (basic residues). Disordered stretches follow at residues 1-43 (MLRL…RTVK) and 83-240 (AAKK…KGAA). Low complexity predominate over residues 18–27 (TTVSSTTTGG). Positions 83–153 (AAKKEADEKV…AAEEAKRYAE (71 aa)) are enriched in basic and acidic residues. Over residues 154–167 (ADDSDNESSSEDYS) the composition is skewed to acidic residues. Positions 192 to 202 (RGKNKVAKAKK) are enriched in basic residues. The segment covering 203-229 (GGRDDENSKNSKNERESNRKNQKDAKF) has biased composition (basic and acidic residues). A tr-type G domain is found at 335–505 (TRAPVVTIMG…LLQSEVLELT (171 aa)). The segment at 344 to 351 (GHVDHGKT) is G1. 344–351 (GHVDHGKT) serves as a coordination point for GTP. A G2 region spans residues 369–373 (GITQH). A G3 region spans residues 391-394 (DTPG). GTP contacts are provided by residues 391 to 395 (DTPGH) and 445 to 448 (NKID). Positions 445 to 448 (NKID) are G4. A G5 region spans residues 481–483 (SAK).

This sequence belongs to the TRAFAC class translation factor GTPase superfamily. Classic translation factor GTPase family. IF-2 subfamily.

The protein resides in the cytoplasm. In terms of biological role, one of the essential components for the initiation of protein synthesis. Protects formylmethionyl-tRNA from spontaneous hydrolysis and promotes its binding to the 30S ribosomal subunits. Also involved in the hydrolysis of GTP during the formation of the 70S ribosomal complex. This chain is Translation initiation factor IF-2, found in Haemophilus influenzae (strain PittEE).